The following is a 2038-amino-acid chain: Fer-1-like protein 5 (2038 aa).

C2 domains follow at residues methionine 1 to arginine 100, threonine 145 to arginine 265, glutamine 307 to tyrosine 424, threonine 1055 to leucine 1186, isoleucine 1225 to tyrosine 1345, proline 1467 to glycine 1587, and glycine 1705 to serine 1853. Ca(2+) contacts are provided by aspartate 1502, aspartate 1508, aspartate 1557, phenylalanine 1558, aspartate 1559, aspartate 1565, aspartate 1824, serine 1827, and aspartate 1830. The chain crosses the membrane as a helical span at residues isoleucine 1961–alanine 1981.

It belongs to the ferlin family. In terms of assembly, interacts (via second C2 domain) with EHD1 and EHD2. Ca(2+) serves as cofactor. Expressed in differentiating myoblasts and myotubes.

Its subcellular location is the cell membrane. The protein localises to the membrane. Its function is as follows. Plays a role in myoblast fusion; probable mediator of endocytic recycling for membrane trafficking events during myotube formation. This chain is Fer-1-like protein 5 (Fer1l5), found in Mus musculus (Mouse).